Reading from the N-terminus, the 311-residue chain is Probable cell division protein WhiA (311 aa).

Residues 277–311 (TLKEVADQIPDGPISKSGVNHRFKKLHELAETLKE) constitute a DNA-binding region (H-T-H motif).

The protein belongs to the WhiA family.

Involved in cell division and chromosome segregation. The sequence is that of Probable cell division protein WhiA from Lactobacillus helveticus (strain DPC 4571).